A 312-amino-acid polypeptide reads, in one-letter code: MSAALERLNHLNLNHLYAFVAVAEHNSFTAAAEALGLSKSLLSEQLRRLEADLGIQLLTRTTRRMTLTDRGELLFGVAQRMLGELDGALSDVRDLQGEPSGRLRITAPQDFVKWHISSVSAAFIRQFPKVQVEMLADDQFSDLVGQRIDLAVRIGWPRDSGLHASKLCDFQQVAVATPGYLAGLPPVLQPHDLARCEWIGHTRLSTPWTWTFERQRERATVQTRGRLLANNTLAVYRLVLDGAGVSVLPSFLVAREIARGRLVRLLPGWRLPQGGIYALYPSARYMPVRVRAFIESLREHLGREPFRLAQSE.

The 58-residue stretch at 11–68 folds into the HTH lysR-type domain; sequence LNLNHLYAFVAVAEHNSFTAAAEALGLSKSLLSEQLRRLEADLGIQLLTRTTRRMTLT. Residues 28–47 constitute a DNA-binding region (H-T-H motif); sequence FTAAAEALGLSKSLLSEQLR.

Belongs to the LysR transcriptional regulatory family. As to quaternary structure, monomer in solution. May dimerize on binding to DNA. Interacts with PtxS in the absence of 2-ketogluconate. Binding of the 2-ketogluconate effector to PtxS causes PtxS/PtxR complex dissociation.

Its activity is regulated as follows. Negatively regulated by PtxS, which interacts with PtxR and prevents its activity. Functionally, plays an important role in the regulation of the production of the virulence factor exotoxin A (toxA), via positive regulation of the transcription of the toxA gene. Acts by binding directly to the toxA promoter region. Besides toxA, PtxR modulates the expression of genes that code for the QS-controlled virulence factors. It negatively regulates the expression of the rhamnolipid and pyocyanine genes, through the autoinducer synthase RhlI, and the PQS synthesis operon pqsABCDE, while it positively regulates the expression of lasB through the autoinducer synthase LasI. Also positively regulates the expression of the exotoxin A regulatory protein (toxR or regA). In terms of biological role, in addition, is involved in the positive regulation of glucose metabolism via the regulation of the expression of the kgu and gad operons. Acts by binding directly to the promoter region of the kgu and gad operons. This is HTH-type transcriptional regulator PtxR from Pseudomonas aeruginosa (strain ATCC 15692 / DSM 22644 / CIP 104116 / JCM 14847 / LMG 12228 / 1C / PRS 101 / PAO1).